Reading from the N-terminus, the 486-residue chain is Protein kinase C and casein kinase substrate in neurons protein 2 (486 aa).

The F-BAR domain maps to 11 to 282 (VEVSSDSFWE…SIKAADAVED (272 aa)). Residues 25–274 (KRTVKRIDDG…TIYRELEQSI (250 aa)) adopt a coiled-coil conformation. Residue K53 is modified to N6-acetyllysine. S273 carries the post-translational modification Phosphoserine. A Phosphoserine; by PKC modification is found at S313. Residues 315–426 (REKKKAVDGV…NPFDEDTTSG (112 aa)) form a disordered region. Positions 327–362 (TGINQTGDQSGQNKPGSNLSVPSNPAQSTQLQSSYN) are enriched in polar residues. An NPF1 motif is present at residues 362–364 (NPF). S373 carries the post-translational modification Phosphoserine; by IKKB. The span at 384–396 (NVSSYEKTQTYPT) shows a compositional bias: polar residues. S399 is subject to Phosphoserine. The segment covering 404 to 416 (NNPFSSTDANGDS) has biased composition (polar residues). The NPF2 signature appears at 405-407 (NPF). The NPF3 signature appears at 417–419 (NPF). Residues 426-486 (GTEVRVRALY…YPANYVEAIQ (61 aa)) form the SH3 domain. At S446 the chain carries Phosphoserine.

It belongs to the PACSIN family. Homodimer. May form heterooligomers with other PACSINs. Interacts (via NPF motifs) with EHD1 (via EH domain). Interacts (via NPF motifs) with EHD2 (via EH domain); this interaction probably stabilizes the caveolae. Interacts with EHD3. Interacts (via the SH3 domain) with MICALL1. Interacts with RAC1. Interacts (via SH3 domain) with DNM1, SYN1, SYNJ1 and WASL. Interacts (via F-BAR domain) with CAV1; this interaction induces membrane tubulation. Interacts with TRPV4. Forms a complex with EHD4 and MICALL1; the complex controls CDH5 trafficking and coordinates angiogenesis. Post-translationally, phosphorylated by casein kinase 2 (CK2). Phosphorylation by PKC probably decreases the membrane binding and tubulation capacities of PACSIN2, thereby modulating the lifetime of caveolae. Widely expressed (at protein level).

Its subcellular location is the cytoplasm. The protein resides in the cytoskeleton. The protein localises to the cytoplasmic vesicle membrane. It localises to the cell projection. It is found in the ruffle membrane. Its subcellular location is the early endosome. The protein resides in the recycling endosome membrane. The protein localises to the cell membrane. It localises to the membrane. It is found in the caveola. Its subcellular location is the cell junction. The protein resides in the adherens junction. In terms of biological role, regulates the morphogenesis and endocytosis of caveolae. Lipid-binding protein that is able to promote the tubulation of the phosphatidic acid-containing membranes it preferentially binds. Plays a role in intracellular vesicle-mediated transport. Involved in the endocytosis of cell-surface receptors like the EGF receptor, contributing to its internalization in the absence of EGF stimulus. Essential for endothelial organization in sprouting angiogenesis, modulates CDH5-based junctions. Facilitates endothelial front-rear polarity during migration by recruiting EHD4 and MICALL1 to asymmetric adherens junctions between leader and follower cells. The protein is Protein kinase C and casein kinase substrate in neurons protein 2 (Pacsin2) of Mus musculus (Mouse).